A 646-amino-acid chain; its full sequence is Ribonuclease Y (646 aa).

A helical membrane pass occupies residues 4 to 24; the sequence is VLVVLLSLVLVVLSVLILAVA. 2 disordered regions span residues 43–62 and 69–118; these read PRTPAARGVGDVTGPADFDE and LPAP…HGGS. Residues 336–402 form the KH domain; that stretch reads VVTVLHLPGD…RITLAALVSD (67 aa). One can recognise an HD domain in the interval 462-555; it reads VLAHLIESAH…TQAADQISGG (94 aa).

It belongs to the RNase Y family.

Its subcellular location is the cell membrane. Its function is as follows. Endoribonuclease that initiates mRNA decay. In Frankia casuarinae (strain DSM 45818 / CECT 9043 / HFP020203 / CcI3), this protein is Ribonuclease Y.